The sequence spans 215 residues: Adenylate kinase (215 aa).

Position 10–15 (10–15) interacts with ATP; sequence GAGKGT. The NMP stretch occupies residues 30–59; the sequence is STGDMLRAAVKAGSPLGQQVKGVMDSGGLV. AMP contacts are provided by residues Thr-31, Arg-36, 57–59, 85–88, and Gln-92; these read GLV and GFPR. The tract at residues 122–159 is LID; the sequence is GRRVHPASGRVYHTEHNPPKVAGKDDVTGEELIQREDD. ATP is bound by residues Arg-123 and 132–133; that span reads VY. 2 residues coordinate AMP: Arg-156 and Arg-167. Residue Gly-201 participates in ATP binding.

It belongs to the adenylate kinase family. As to quaternary structure, monomer.

It is found in the cytoplasm. The enzyme catalyses AMP + ATP = 2 ADP. It participates in purine metabolism; AMP biosynthesis via salvage pathway; AMP from ADP: step 1/1. Functionally, catalyzes the reversible transfer of the terminal phosphate group between ATP and AMP. Plays an important role in cellular energy homeostasis and in adenine nucleotide metabolism. This is Adenylate kinase from Pseudomonas aeruginosa (strain LESB58).